We begin with the raw amino-acid sequence, 393 residues long: Isocitrate dehydrogenase [NAD] subunit gamma 1, mitochondrial (393 aa).

Residues 1–39 (MALKVAIAAGSAAKAIFKPALLCRPWEVLAAHEAPRRSI) constitute a mitochondrion transit peptide. Residue Thr120 coordinates citrate. Phosphoserine is present on Ser130. Asn133 provides a ligand contact to citrate. 2 residues coordinate substrate: Arg136 and Arg167. The residue at position 206 (Lys206) is an N6-acetyllysine. Lys226 carries the N6-succinyllysine modification. Residue Asp254 participates in substrate binding. Asp254 provides a ligand contact to Mn(2+). Asn312, Thr313, and Asn324 together coordinate ADP.

It belongs to the isocitrate and isopropylmalate dehydrogenases family. In terms of assembly, heterooligomer of subunits alpha (IDH3A), beta (IDH3B), and gamma (IDH3G) in the apparent ratio of 2:1:1. The heterodimer containing one IDH3A and one IDH3B subunit and the heterodimer containing one IDH3A and one IDH3G subunit assemble into a heterotetramer (which contains two subunits of IDH3A, one of IDH3B and one of IDH3G) and further into the heterooctamer. Requires Mg(2+) as cofactor. Mn(2+) is required as a cofactor.

The protein resides in the mitochondrion. With respect to regulation, the heterotetramer and the heterodimer composed of IDH3A and IDH3G subunits can be allosterically activated by citrate (CIT) or/and ADP, and the two activators can act independently or synergistically. The heterodimer composed of IDH3A and IDH3B subunits cannot be allosterically regulated and the allosteric regulation of the heterotetramer is through the IDH3G subunit and not the IDH3B subunit. The IDH3G subunit contains the allosteric site which consists of a CIT-binding site and an ADP-binding site, and the binding of CIT and ADP causes conformational changes at the allosteric site which are transmitted to the active site in the catalytic subunit (IDH3A) through a cascade of conformational changes at the heterodimer interface, leading to stabilization of the isocitrate-binding at the active site and thus activation of the enzyme. ATP can activate the heterotetramer and the heterodimer composed of IDH3A and IDH3G subunits at low concentrations but inhibits their activities at high concentrations, whereas ATP exhibits only inhibitory effect on the heterodimer composed of IDH3A and IDH3B subunits. Its function is as follows. Regulatory subunit which plays a role in the allosteric regulation of the enzyme catalyzing the decarboxylation of isocitrate (ICT) into alpha-ketoglutarate. The heterodimer composed of the alpha (IDH3A) and beta (IDH3B) subunits and the heterodimer composed of the alpha (IDH3A) and gamma (IDH3G) subunits, have considerable basal activity but the full activity of the heterotetramer (containing two subunits of IDH3A, one of IDH3B and one of IDH3G) requires the assembly and cooperative function of both heterodimers. This is Isocitrate dehydrogenase [NAD] subunit gamma 1, mitochondrial (Idh3g) from Rattus norvegicus (Rat).